Here is an 82-residue protein sequence, read N- to C-terminus: MKRTNMKKARMEQSRRPKKNPLKAEGIETVDYKNYDLLRKFISERGKIRSRRVTGLTPQQQRQVATAVKNAREMALLPFHSR.

The disordered stretch occupies residues 1–24 (MKRTNMKKARMEQSRRPKKNPLKA).

This sequence belongs to the bacterial ribosomal protein bS18 family. As to quaternary structure, part of the 30S ribosomal subunit. Forms a tight heterodimer with protein bS6.

Binds as a heterodimer with protein bS6 to the central domain of the 16S rRNA, where it helps stabilize the platform of the 30S subunit. This chain is Small ribosomal subunit protein bS18, found in Corynebacterium jeikeium (strain K411).